The chain runs to 395 residues: Lipoyl synthase, mitochondrial (395 aa).

The transit peptide at 1–14 (MISLRSISRSPAVQ) directs the protein to the mitochondrion. 7 residues coordinate [4Fe-4S] cluster: Cys-112, Cys-117, Cys-123, Cys-142, Cys-146, Cys-149, and Ser-357. The region spanning 127–346 (KKSEATATIM…RDTALQMGFL (220 aa)) is the Radical SAM core domain.

Belongs to the radical SAM superfamily. Lipoyl synthase family. [4Fe-4S] cluster is required as a cofactor.

The protein resides in the mitochondrion. It catalyses the reaction [[Fe-S] cluster scaffold protein carrying a second [4Fe-4S](2+) cluster] + N(6)-octanoyl-L-lysyl-[protein] + 2 oxidized [2Fe-2S]-[ferredoxin] + 2 S-adenosyl-L-methionine + 4 H(+) = [[Fe-S] cluster scaffold protein] + N(6)-[(R)-dihydrolipoyl]-L-lysyl-[protein] + 4 Fe(3+) + 2 hydrogen sulfide + 2 5'-deoxyadenosine + 2 L-methionine + 2 reduced [2Fe-2S]-[ferredoxin]. It functions in the pathway protein modification; protein lipoylation via endogenous pathway; protein N(6)-(lipoyl)lysine from octanoyl-[acyl-carrier-protein]: step 2/2. Functionally, catalyzes the radical-mediated insertion of two sulfur atoms into the C-6 and C-8 positions of the octanoyl moiety bound to the lipoyl domains of lipoate-dependent enzymes, thereby converting the octanoylated domains into lipoylated derivatives. The protein is Lipoyl synthase, mitochondrial of Debaryomyces hansenii (strain ATCC 36239 / CBS 767 / BCRC 21394 / JCM 1990 / NBRC 0083 / IGC 2968) (Yeast).